The following is a 743-amino-acid chain: Glycerol-3-phosphate O-acyltransferase 2 (743 aa).

The Lumenal portion of the chain corresponds to 1–34 (MSAPAADHNAAKPIPHVPQASRRYKNSYNGFVYN). The helical transmembrane segment at 35–55 (IHTWLYDVSVFLFNILFTIFF) threads the bilayer. The Cytoplasmic portion of the chain corresponds to 56–442 (REIKVRGAYN…TKLEALRCFV (387 aa)). The helical transmembrane segment at 443–457 (TLIVRLIKFSVFAIL) threads the bilayer. Residue serine 458 is a topological domain, lumenal. A helical membrane pass occupies residues 459–473 (LPGSILFTPIFIICR). Over 474–501 (VYSEKKAKEGLKKSLVKIKGTDLLATWK) the chain is Cytoplasmic. Residues 502 to 522 (LIVALILAPILYVTYSILLII) traverse the membrane as a helical segment. The Lumenal segment spans residues 523-531 (LARKQHYCR). The chain crosses the membrane as a helical span at residues 532-552 (IWVPSNNAFIQFVYFYALLVF). Residues 553–743 (TTYSSLKTGE…RQKREHEKKE (191 aa)) lie on the Cytoplasmic side of the membrane. Phosphoserine occurs at positions 632, 637, 647, 651, 654, 657, 664, 668, and 671. Threonine 673 carries the post-translational modification Phosphothreonine. Residues 682–743 (KQGQWKSEGE…RQKREHEKKE (62 aa)) form a disordered region. Phosphoserine is present on serine 688. Over residues 691–700 (ETSEDEDEFD) the composition is skewed to acidic residues. Threonine 692 bears the Phosphothreonine mark. Serine 693 bears the Phosphoserine mark.

Belongs to the GPAT/DAPAT family. Post-translationally, phosphorylated at a conserved motif involving Ser-664, Ser-668 and Ser-671. This phosphorylation plays a critical role for efficient TAG mobilization. Phosphorylation deficiency at this motif increases the enzyme activity and consequently induces de novo formation of phosphatidic acid.

Its subcellular location is the lipid droplet. The protein resides in the endoplasmic reticulum membrane. It catalyses the reaction sn-glycerol 3-phosphate + an acyl-CoA = a 1-acyl-sn-glycero-3-phosphate + CoA. The catalysed reaction is dihydroxyacetone phosphate + an acyl-CoA = a 1-acylglycerone 3-phosphate + CoA. The enzyme catalyses sn-glycerol 3-phosphate + hexadecanoyl-CoA = 1-hexadecanoyl-sn-glycero-3-phosphate + CoA. It carries out the reaction (9Z)-hexadecenoyl-CoA + sn-glycerol 3-phosphate = 1-(9Z-hexadecenoyl)-sn-glycero-3-phosphate + CoA. It catalyses the reaction sn-glycerol 3-phosphate + octadecanoyl-CoA = 1-octadecanoyl-sn-glycero-3-phosphate + CoA. The catalysed reaction is sn-glycerol 3-phosphate + (9Z)-octadecenoyl-CoA = 1-(9Z-octadecenoyl)-sn-glycero-3-phosphate + CoA. Its pathway is phospholipid metabolism; CDP-diacylglycerol biosynthesis; CDP-diacylglycerol from sn-glycerol 3-phosphate: step 1/3. Functionally, dual substrate-specific glycerol-3-phosphate/dihydroxyacetone phosphate sn-1 acyltransferase, catalyzing the first and committed reaction in the de novo synthesis of glycerophospholipids and triacylglycerols (TAGs). Can use both Gly-3-P and dihydroxyacetone phosphate with similar efficiencies and has a broad fatty acyl-CoA specificity profile. Transfers a fatty acid from fatty acyl-CoA to the sn-1 position of glycerol-3-phosphate to produce lysophosphatidic acid (LysoPA). These lipids not only are precursors of glycerolipids, but also are dynamic components of signal transduction systems that control cell physiology. This Saccharomyces cerevisiae (strain ATCC 204508 / S288c) (Baker's yeast) protein is Glycerol-3-phosphate O-acyltransferase 2 (GPT2).